Here is a 245-residue protein sequence, read N- to C-terminus: Venom nerve growth factor 1 (245 aa).

A signal peptide spans 1–18 (MSMLCYTLIIAFLIGIWA). Positions 19–125 (APKSEDNVPL…ALNRNIRAKR (107 aa)) are excised as a propeptide. A compositionally biased stretch (basic and acidic residues) spans 47–66 (GLKTSRNTDQRHPAPKKAED). Residues 47-69 (GLKTSRNTDQRHPAPKKAEDQEL) are disordered. 3 cysteine pairs are disulfide-bonded: Cys139-Cys206, Cys182-Cys234, and Cys194-Cys236. Residues Asn148 and Asn151 are each glycosylated (N-linked (GlcNAc...) asparagine).

Belongs to the NGF-beta family. As to quaternary structure, homodimer; non-covalently linked. In terms of tissue distribution, expressed by the venom gland.

The protein resides in the secreted. Its function is as follows. Nerve growth factor is important for the development and maintenance of the sympathetic and sensory nervous systems. It stimulates division and differentiation of sympathetic and embryonic sensory neurons as well as basal forebrain cholinergic neurons in the brain. Its relevance in the snake venom is not clear. However, it has been shown to inhibit metalloproteinase-dependent proteolysis of platelet glycoprotein Ib alpha, suggesting a metalloproteinase inhibition to prevent metalloprotease autodigestion and/or protection against prey proteases. Binds a lipid between the two protein chains in the homodimer. The lipid-bound form promotes histamine relase from mouse mast cells, contrary to the lipid-free form. In Tropidechis carinatus (Australian rough-scaled snake), this protein is Venom nerve growth factor 1.